Here is a 288-residue protein sequence, read N- to C-terminus: MEFLYTYETLKLEFPLVEPEKARFILLGVPFDGTTSYKAGARFGPTLIRQATLNLESYILDYDLDIAELPIADIGDIAVVAGDPRKTADRVRETLEELKKANPKAIPILLGGEHSQTLGAVEALKPASYVVFDAHLDLRNSYEDNPYNHACVARRISELGVKEAIFGIRSGTKEEVDFARERDIPWVHARDYSFDAFVDLVEALPEPVYLSIDIDVFDLSMVPSTGTPEAGGLRFWEVVEAIEWLVEKKEIAGFDIMEVAGEKLGDPTALTAAKLLFYSIGAMAKFGR.

The Mn(2+) site is built by His114, Asp133, His135, Asp137, Asp213, and Asp215.

The protein belongs to the arginase family. It depends on Mn(2+) as a cofactor.

The protein localises to the cytoplasm. The catalysed reaction is N(1)-(3-aminopropyl)agmatine + H2O = urea + spermidine. It catalyses the reaction agmatine + H2O = urea + putrescine. It functions in the pathway amine and polyamine biosynthesis; spermidine biosynthesis. In terms of biological role, involved in the biosynthesis of polyamines which are thought to support the growth of thermophilic microorganisms under high-temperature conditions. It seems that long-chain and branched-chain of polyamines effectively stabilize DNA and RNA, respectively. Catalyzes the decarboxylation of N1-(3-aminopropyl)agmatine to yield spermidine and urea. It can also use agmatine to yield putrescine. The chain is N(1)-aminopropylagmatine ureohydrolase from Thermococcus kodakarensis (strain ATCC BAA-918 / JCM 12380 / KOD1) (Pyrococcus kodakaraensis (strain KOD1)).